We begin with the raw amino-acid sequence, 93 residues long: UPF0473 protein BH1270 (93 aa).

It belongs to the UPF0473 family.

The polypeptide is UPF0473 protein BH1270 (Halalkalibacterium halodurans (strain ATCC BAA-125 / DSM 18197 / FERM 7344 / JCM 9153 / C-125) (Bacillus halodurans)).